A 144-amino-acid chain; its full sequence is Hemoglobin embryonic subunit alpha (144 aa).

In terms of domain architecture, Globin spans 3 to 144 (SLSAKDKDVV…LALALAEKYR (142 aa)). Position 61 (His-61) interacts with O2. His-90 is a binding site for heme b.

The protein belongs to the globin family. As to quaternary structure, heterotetramer of two alpha chains and two beta chains. As to expression, red blood cells.

Its function is as follows. Involved in oxygen transport from gills to the various peripheral tissues. The sequence is that of Hemoglobin embryonic subunit alpha from Oryzias latipes (Japanese rice fish).